The primary structure comprises 239 residues: Fatty acid metabolism regulator protein (239 aa).

An HTH gntR-type domain is found at 6–74; the sequence is QSPAGFAEEY…HGKPTKVNNF (69 aa). The segment at residues 34-53 is a DNA-binding region (H-T-H motif); sequence ERELSELIGVTRTTLREVLQ.

In terms of assembly, homodimer.

It is found in the cytoplasm. Multifunctional regulator of fatty acid metabolism. The sequence is that of Fatty acid metabolism regulator protein from Yersinia pseudotuberculosis serotype O:1b (strain IP 31758).